Consider the following 107-residue polypeptide: Nucleoid-associated protein GbCGDNIH1_0260 (107 aa).

This sequence belongs to the YbaB/EbfC family. In terms of assembly, homodimer.

Its subcellular location is the cytoplasm. The protein localises to the nucleoid. Functionally, binds to DNA and alters its conformation. May be involved in regulation of gene expression, nucleoid organization and DNA protection. The polypeptide is Nucleoid-associated protein GbCGDNIH1_0260 (Granulibacter bethesdensis (strain ATCC BAA-1260 / CGDNIH1)).